A 1555-amino-acid chain; its full sequence is Phospholipid-transporting ATPase DNF1 (1555 aa).

The interval 1-85 (MAPPQEEGGG…SSNNGGSAPR (85 aa)) is disordered. Over 1–134 (MAPPQEEGGG…PKNLWFQFHN (134 aa)) the chain is Cytoplasmic. Positions 22 to 37 (WATRRLTVKSGARKRL) are enriched in basic residues. The span at 72 to 82 (GSISSSNNGGS) shows a compositional bias: low complexity. A helical transmembrane segment spans residues 135-155 (IANIFFLFLVILVIFPIFGGV). Residue Asn156 is a topological domain, extracellular. The chain crosses the membrane as a helical span at residues 157–177 (PGLNSVPLIVIITVTAIKDAI). Over 178 to 491 (EDYRRTILDI…ARIARELNFN (314 aa)) the chain is Cytoplasmic. A disordered region spans residues 257-288 (TRTAPWDPSHRRSVASHTEEIQMTPVPSPVPH). Residues 492-512 (VICNFGILLIMCLIAAIANGI) traverse the membrane as a helical segment. Residues 513 to 537 (AWGKTDASLAWFEYGSIGGTPALTG) lie on the Extracellular side of the membrane. A helical membrane pass occupies residues 538–558 (FITFWAAVIVFQNLVPISLYI). The Cytoplasmic segment spans residues 559 to 1123 (SLEIVRTLQA…TISNFFYKNM (565 aa)). Residue Asp606 is the 4-aspartylphosphate intermediate of the active site. The ATP site is built by Asp606, Lys607, Thr608, Glu740, Phe781, Ser783, Lys786, Lys804, Arg839, Thr840, Thr919, Gly920, Asp921, Arg1031, and Lys1037. A Mg(2+)-binding site is contributed by Asp606. Thr608 provides a ligand contact to Mg(2+). Mg(2+) is bound at residue Asp1057. ATP contacts are provided by Asn1060 and Asp1061. Asp1061 is a Mg(2+) binding site. Residues 1124–1144 (IWTWSIFWYQCYCNFDIAYIF) form a helical membrane-spanning segment. Topologically, residues 1145–1146 (EY) are extracellular. Residues 1147 to 1167 (TYILMFNLFFTSVPVILMGVL) form a helical membrane-spanning segment. Residues 1168 to 1200 (DQDVSDTVSLAVPQLYRRGIERKEWTQTKFWLY) are Cytoplasmic-facing. The chain crosses the membrane as a helical span at residues 1201–1221 (MIDGVYQSVMSFFIPFIFVVL). Over 1222–1237 (TPTAAGNGLDVSERTR) the chain is Extracellular. The chain crosses the membrane as a helical span at residues 1238–1258 (LGAYIAHPAVITINGYILINT). The Cytoplasmic segment spans residues 1259–1262 (YRWD). The helical transmembrane segment at 1263–1283 (WLMLLSIVLSDVFIFFWTGVY) threads the bilayer. The Extracellular segment spans residues 1284–1302 (TATTYSAGFYQAAPQVYQE). The chain crosses the membrane as a helical span at residues 1303–1323 (LTFWMCLIVTPALCLLPRLVV). Residue Arg1320 coordinates a 1,2-diacyl-sn-glycero-3-phospho-L-serine. The Cytoplasmic segment spans residues 1324–1555 (KCIQKQRFPY…EGEPPREPPM (232 aa)). Disordered stretches follow at residues 1364–1456 (VEGE…ERTR) and 1489–1555 (ESTH…EPPM). Residues 1406–1432 (ATHNTRAQNGSDGTTYIMQSRTSTELQ) are compositionally biased toward polar residues. Basic and acidic residues-rich tracts occupy residues 1436 to 1456 (PFDRDREEETPAVRPSIERTR) and 1540 to 1555 (KSIDTTEGEPPREPPM).

This sequence belongs to the cation transport ATPase (P-type) (TC 3.A.3) family. Type IV subfamily. In terms of assembly, component of a flippase complex consisting of DNF1 and CDC50. Interacts with CDC50; the interaction is direct. Mg(2+) serves as cofactor.

The protein localises to the cell membrane. It is found in the endosome membrane. It localises to the golgi apparatus. The protein resides in the trans-Golgi network membrane. The catalysed reaction is ATP + H2O + phospholipidSide 1 = ADP + phosphate + phospholipidSide 2.. It catalyses the reaction a 1,2-diacyl-sn-glycero-3-phosphoethanolamine(out) + ATP + H2O = a 1,2-diacyl-sn-glycero-3-phosphoethanolamine(in) + ADP + phosphate + H(+). It carries out the reaction a 1,2-diacyl-sn-glycero-3-phosphocholine(out) + ATP + H2O = a 1,2-diacyl-sn-glycero-3-phosphocholine(in) + ADP + phosphate + H(+). The enzyme catalyses a beta-D-glucosyl-(1&lt;-&gt;1')-N-acylsphing-4-enine(out) + ATP + H2O = a beta-D-glucosyl-(1&lt;-&gt;1')-N-acylsphing-4-enine(in) + ADP + phosphate + H(+). The catalysed reaction is a 1,2-diacyl-sn-glycero-3-phospho-L-serine(out) + ATP + H2O = a 1,2-diacyl-sn-glycero-3-phospho-L-serine(in) + ADP + phosphate + H(+). Functionally, catalytic component of a P4-ATPase flippase complex which catalyzes the hydrolysis of ATP coupled to the transport of phosphatidylcholine and phosphatidylserine from the lumenal to the cytosolic leaflet of membranes and ensures the maintenance of asymmetric distribution of phospholipids. May also transport glucosylceramide and phosphatidylethanolamine. The polypeptide is Phospholipid-transporting ATPase DNF1 (Chaetomium thermophilum (strain DSM 1495 / CBS 144.50 / IMI 039719) (Thermochaetoides thermophila)).